A 54-amino-acid polypeptide reads, in one-letter code: Large ribosomal subunit protein bL33B (54 aa).

The protein belongs to the bacterial ribosomal protein bL33 family.

The sequence is that of Large ribosomal subunit protein bL33B from Mycolicibacterium vanbaalenii (strain DSM 7251 / JCM 13017 / BCRC 16820 / KCTC 9966 / NRRL B-24157 / PYR-1) (Mycobacterium vanbaalenii).